Consider the following 582-residue polypeptide: L-fucose isomerase (582 aa).

Residues glutamate 333 and aspartate 357 each act as proton acceptor in the active site. The Mn(2+) site is built by glutamate 333, aspartate 357, and histidine 520.

Belongs to the L-fucose isomerase family. It depends on Mn(2+) as a cofactor.

It localises to the cytoplasm. The enzyme catalyses L-fucose = L-fuculose. The protein operates within carbohydrate degradation; L-fucose degradation; L-lactaldehyde and glycerone phosphate from L-fucose: step 1/3. In terms of biological role, converts the aldose L-fucose into the corresponding ketose L-fuculose. The polypeptide is L-fucose isomerase (Vibrio vulnificus (strain YJ016)).